The sequence spans 35 residues: Photosystem II reaction center protein T (35 aa).

Residues 3-23 traverse the membrane as a helical segment; sequence ALVYTFLLVSTLGIIFFAIFF.

It belongs to the PsbT family. In terms of assembly, PSII is composed of 1 copy each of membrane proteins PsbA, PsbB, PsbC, PsbD, PsbE, PsbF, PsbH, PsbI, PsbJ, PsbK, PsbL, PsbM, PsbT, PsbY, PsbZ, Psb30/Ycf12, at least 3 peripheral proteins of the oxygen-evolving complex and a large number of cofactors. It forms dimeric complexes.

The protein resides in the plastid. It is found in the chloroplast thylakoid membrane. Functionally, found at the monomer-monomer interface of the photosystem II (PS II) dimer, plays a role in assembly and dimerization of PSII. PSII is a light-driven water plastoquinone oxidoreductase, using light energy to abstract electrons from H(2)O, generating a proton gradient subsequently used for ATP formation. This chain is Photosystem II reaction center protein T, found in Oenothera argillicola (Appalachian evening primrose).